Here is a 306-residue protein sequence, read N- to C-terminus: Agmatinase (306 aa).

The Mn(2+) site is built by His126, Asp149, His151, Asp153, Asp230, and Asp232.

The protein belongs to the arginase family. Agmatinase subfamily. The cofactor is Mn(2+).

It catalyses the reaction agmatine + H2O = urea + putrescine. It functions in the pathway amine and polyamine biosynthesis; putrescine biosynthesis via agmatine pathway; putrescine from agmatine: step 1/1. In terms of biological role, catalyzes the formation of putrescine from agmatine. In Shigella dysenteriae serotype 1 (strain Sd197), this protein is Agmatinase.